The sequence spans 324 residues: Acetyl-coenzyme A carboxylase carboxyl transferase subunit alpha (324 aa).

Positions 44–298 (ILQRKLLNLK…KNKIRDQLDF (255 aa)) constitute a CoA carboxyltransferase C-terminal domain.

This sequence belongs to the AccA family. As to quaternary structure, acetyl-CoA carboxylase is a heterohexamer composed of biotin carboxyl carrier protein (accB), biotin carboxylase (accC) and two subunits each of ACCase subunit alpha (accA) and ACCase subunit beta (accD).

The protein resides in the plastid. It is found in the chloroplast. The catalysed reaction is N(6)-carboxybiotinyl-L-lysyl-[protein] + acetyl-CoA = N(6)-biotinyl-L-lysyl-[protein] + malonyl-CoA. It functions in the pathway lipid metabolism; malonyl-CoA biosynthesis; malonyl-CoA from acetyl-CoA: step 1/1. In terms of biological role, component of the acetyl coenzyme A carboxylase (ACC) complex. First, biotin carboxylase catalyzes the carboxylation of biotin on its carrier protein (BCCP) and then the CO(2) group is transferred by the carboxyltransferase to acetyl-CoA to form malonyl-CoA. This Cyanidium caldarium (Red alga) protein is Acetyl-coenzyme A carboxylase carboxyl transferase subunit alpha.